A 188-amino-acid chain; its full sequence is Ribosome maturation factor RimM (188 aa).

Residues 98-174 (EGTFYYHDLR…HLTADAPAGL (77 aa)) form the PRC barrel domain. Residues 169-188 (DAPAGLIGPEPGEEDGAAES) form a disordered region. Acidic residues predominate over residues 179-188 (PGEEDGAAES).

Belongs to the RimM family. Binds ribosomal protein uS19.

It localises to the cytoplasm. Its function is as follows. An accessory protein needed during the final step in the assembly of 30S ribosomal subunit, possibly for assembly of the head region. Essential for efficient processing of 16S rRNA. May be needed both before and after RbfA during the maturation of 16S rRNA. It has affinity for free ribosomal 30S subunits but not for 70S ribosomes. The polypeptide is Ribosome maturation factor RimM (Deinococcus radiodurans (strain ATCC 13939 / DSM 20539 / JCM 16871 / CCUG 27074 / LMG 4051 / NBRC 15346 / NCIMB 9279 / VKM B-1422 / R1)).